Consider the following 394-residue polypeptide: Tryptophan synthase beta chain (394 aa).

K90 is modified (N6-(pyridoxal phosphate)lysine).

Belongs to the TrpB family. Tetramer of two alpha and two beta chains. Pyridoxal 5'-phosphate is required as a cofactor.

The catalysed reaction is (1S,2R)-1-C-(indol-3-yl)glycerol 3-phosphate + L-serine = D-glyceraldehyde 3-phosphate + L-tryptophan + H2O. Its pathway is amino-acid biosynthesis; L-tryptophan biosynthesis; L-tryptophan from chorismate: step 5/5. Its function is as follows. The beta subunit is responsible for the synthesis of L-tryptophan from indole and L-serine. This is Tryptophan synthase beta chain from Bacteroides thetaiotaomicron (strain ATCC 29148 / DSM 2079 / JCM 5827 / CCUG 10774 / NCTC 10582 / VPI-5482 / E50).